The chain runs to 223 residues: Deoxyribose-phosphate aldolase (223 aa).

Residue aspartate 91 is the Proton donor/acceptor of the active site. The Schiff-base intermediate with acetaldehyde role is filled by lysine 154. Lysine 183 acts as the Proton donor/acceptor in catalysis.

It belongs to the DeoC/FbaB aldolase family. DeoC type 1 subfamily.

It is found in the cytoplasm. The catalysed reaction is 2-deoxy-D-ribose 5-phosphate = D-glyceraldehyde 3-phosphate + acetaldehyde. The protein operates within carbohydrate degradation; 2-deoxy-D-ribose 1-phosphate degradation; D-glyceraldehyde 3-phosphate and acetaldehyde from 2-deoxy-alpha-D-ribose 1-phosphate: step 2/2. In terms of biological role, catalyzes a reversible aldol reaction between acetaldehyde and D-glyceraldehyde 3-phosphate to generate 2-deoxy-D-ribose 5-phosphate. The protein is Deoxyribose-phosphate aldolase of Lysinibacillus sphaericus (strain C3-41).